The sequence spans 75 residues: Large ribosomal subunit protein bL31 (75 aa).

Residues cysteine 16, cysteine 18, cysteine 37, and cysteine 40 each contribute to the Zn(2+) site.

This sequence belongs to the bacterial ribosomal protein bL31 family. Type A subfamily. As to quaternary structure, part of the 50S ribosomal subunit. The cofactor is Zn(2+).

Its function is as follows. Binds the 23S rRNA. This chain is Large ribosomal subunit protein bL31, found in Legionella pneumophila (strain Paris).